The sequence spans 31 residues: Cuticle protein 54 (31 aa).

A run of 2 repeats spans residues 7 to 10 (AAPA) and 13 to 17 (AAPAI).

In terms of biological role, component of the cuticle of migratory locust which contains more than 100 different structural proteins. In Locusta migratoria (Migratory locust), this protein is Cuticle protein 54.